The sequence spans 236 residues: MNAAIEHVQAVAFDLDGTLCDSVPDLAAAAEAMLEQLGMKPLPAKVVESYVGDGIGKLVHRVLTNDRDREADSELWEKGFVSYMKYYRDHLSVFTRPYPETEAGLALLKSLGIPLVIITNKNEILAAELLKQLGLADYFSLILGGDSLPEKKPSPLPLRHAAEVLGIDAANMLMVGDSRNDIIAAKAAGCLSVGVTFGYGDMTLLSQDDTTRPDRIIGALPEIYENLQPQKNKDEE.

The Nucleophile role is filled by Asp-14. Mg(2+)-binding residues include Asp-14, Asp-16, and Asp-177.

The protein belongs to the HAD-like hydrolase superfamily. CbbY/CbbZ/Gph/YieH family. It depends on Mg(2+) as a cofactor.

The enzyme catalyses 2-phosphoglycolate + H2O = glycolate + phosphate. The protein operates within organic acid metabolism; glycolate biosynthesis; glycolate from 2-phosphoglycolate: step 1/1. Specifically catalyzes the dephosphorylation of 2-phosphoglycolate. Is involved in the dissimilation of the intracellular 2-phosphoglycolate formed during the DNA repair of 3'-phosphoglycolate ends, a major class of DNA lesions induced by oxidative stress. This is Phosphoglycolate phosphatase from Neisseria gonorrhoeae (strain ATCC 700825 / FA 1090).